The primary structure comprises 343 residues: Dihydroorotate dehydrogenase (quinone) (343 aa).

Residues 61 to 65 (AGLDK) and T85 each bind FMN. K65 is a substrate binding site. A substrate-binding site is contributed by 110 to 114 (NRMGF). N138 and N171 together coordinate FMN. N171 contributes to the substrate binding site. The active-site Nucleophile is S174. N176 is a binding site for substrate. FMN-binding residues include K216 and T244. 245–246 (NT) provides a ligand contact to substrate. Residues G267, G296, and 317–318 (YS) contribute to the FMN site.

This sequence belongs to the dihydroorotate dehydrogenase family. Type 2 subfamily. In terms of assembly, monomer. FMN serves as cofactor.

It localises to the cell membrane. It carries out the reaction (S)-dihydroorotate + a quinone = orotate + a quinol. The protein operates within pyrimidine metabolism; UMP biosynthesis via de novo pathway; orotate from (S)-dihydroorotate (quinone route): step 1/1. Its function is as follows. Catalyzes the conversion of dihydroorotate to orotate with quinone as electron acceptor. The polypeptide is Dihydroorotate dehydrogenase (quinone) (Stutzerimonas stutzeri (strain A1501) (Pseudomonas stutzeri)).